Here is a 799-residue protein sequence, read N- to C-terminus: Pentatricopeptide repeat-containing protein At2g26790, mitochondrial (799 aa).

A mitochondrion-targeting transit peptide spans 1-27; it reads MRFSPTFFLLSQLRLTRRRAATSSRFY. PPR repeat units lie at residues 145 to 179, 180 to 214, 215 to 250, 251 to 278, 282 to 316, 317 to 351, 352 to 386, 387 to 421, 422 to 456, 457 to 491, 492 to 522, 523 to 553, 555 to 589, 590 to 624, 625 to 659, 660 to 695, 708 to 742, and 743 to 777; these read LIRV…DCVV, DIKA…GLCA, NEYT…GYKT, FING…KYLA, LRAV…GFGL, DVYA…GLKV, NCVI…NIFL, DRVC…GIVP, DVIN…GMSP, DLIT…GPKP, NAVT…LEQK, CPEN…LEYP, RKSV…RVEP, GRSM…GLIP, DLFT…GIKP, DVVT…KASE, DVVC…GLEP, and DMVA…YNIP.

This sequence belongs to the PPR family. P subfamily.

It is found in the mitochondrion. In Arabidopsis thaliana (Mouse-ear cress), this protein is Pentatricopeptide repeat-containing protein At2g26790, mitochondrial.